Reading from the N-terminus, the 468-residue chain is Mannan endo-1,4-beta-mannosidase 3 (468 aa).

The signal sequence occupies residues 1-23 (MTVRPRPAAAAIIIAAVFGAAAA). Residue W86 coordinates substrate. Residue N152 is glycosylated (N-linked (GlcNAc...) asparagine). Substrate is bound at residue N201. E202 functions as the Proton donor in the catalytic mechanism. Y281 contacts substrate. N300 carries an N-linked (GlcNAc...) asparagine glycan. E321 functions as the Nucleophile in the catalytic mechanism. A glycan (N-linked (GlcNAc...) asparagine) is linked at N333. Substrate-binding residues include W364 and D371. Residues 415–436 (LRRRRRRPASSHRKTRLGSGGD) form a disordered region. The segment covering 416 to 430 (RRRRRRPASSHRKTR) has biased composition (basic residues).

This sequence belongs to the glycosyl hydrolase 5 (cellulase A) family. In terms of tissue distribution, expressed in seeds.

The protein resides in the secreted. The catalysed reaction is Random hydrolysis of (1-&gt;4)-beta-D-mannosidic linkages in mannans, galactomannans and glucomannans.. The protein is Mannan endo-1,4-beta-mannosidase 3 (MAN3) of Oryza sativa subsp. japonica (Rice).